The following is a 225-amino-acid chain: Protein LiaH (225 aa).

2 coiled-coil regions span residues 58-151 (KKYE…KEHM) and 161-182 (ESAYREFLRIENRIEEMEIRAN).

Belongs to the PspA/Vipp/IM30 family.

In Bacillus subtilis (strain 168), this protein is Protein LiaH (liaH).